The chain runs to 61 residues: Small ribosomal subunit protein uS14 (61 aa).

4 residues coordinate Zn(2+): Cys24, Cys27, Cys40, and Cys43.

This sequence belongs to the universal ribosomal protein uS14 family. Zinc-binding uS14 subfamily. As to quaternary structure, part of the 30S ribosomal subunit. Contacts proteins S3 and S10. The cofactor is Zn(2+).

Binds 16S rRNA, required for the assembly of 30S particles and may also be responsible for determining the conformation of the 16S rRNA at the A site. In Elusimicrobium minutum (strain Pei191), this protein is Small ribosomal subunit protein uS14.